Here is a 355-residue protein sequence, read N- to C-terminus: UDP-galactose translocator 1 (355 aa).

The tract at residues 1–36 (MKFQNVHISHQDEDKEKLLPNDKDVEKADESPSSSR) is disordered. The span at 9-30 (SHQDEDKEKLLPNDKDVEKADE) shows a compositional bias: basic and acidic residues. 6 consecutive transmembrane segments (helical) span residues 40–60 (VFKC…TLTI), 177–197 (WMAI…NVSA), 211–231 (IVGL…GVYF), 282–302 (VWAV…VMRY), 309–329 (SMAS…IFPD), and 330–350 (IFIG…VLLY).

Belongs to the nucleotide-sugar transporter family. SLC35A subfamily.

It is found in the membrane. The protein resides in the cytoplasmic granule membrane. The protein is UDP-galactose translocator 1 (ugtp-1) of Caenorhabditis elegans.